Reading from the N-terminus, the 324-residue chain is Cathepsin L-like proteinase (324 aa).

Residues 1–16 form the signal peptide; that stretch reads MKLIIALAALIVVINA. 3 cysteine pairs are disulfide-bonded: cysteine 131–cysteine 174, cysteine 165–cysteine 206, and cysteine 263–cysteine 312. Cysteine 134 is an active-site residue. Residues histidine 270 and asparagine 290 contribute to the active site.

Belongs to the peptidase C1 family. Expressed in larval carcasses and gut, and adult gut.

This is Cathepsin L-like proteinase from Phaedon cochleariae (Mustard beetle).